The primary structure comprises 121 residues: Large ribosomal subunit protein bL12 (121 aa).

The protein belongs to the bacterial ribosomal protein bL12 family. In terms of assembly, homodimer. Part of the ribosomal stalk of the 50S ribosomal subunit. Forms a multimeric L10(L12)X complex, where L10 forms an elongated spine to which 2 to 4 L12 dimers bind in a sequential fashion. Binds GTP-bound translation factors.

Forms part of the ribosomal stalk which helps the ribosome interact with GTP-bound translation factors. Is thus essential for accurate translation. The sequence is that of Large ribosomal subunit protein bL12 from Shigella sonnei (strain Ss046).